The sequence spans 81 residues: Small ribosomal subunit protein bS16 (81 aa).

This sequence belongs to the bacterial ribosomal protein bS16 family.

The sequence is that of Small ribosomal subunit protein bS16 from Clostridium acetobutylicum (strain ATCC 824 / DSM 792 / JCM 1419 / IAM 19013 / LMG 5710 / NBRC 13948 / NRRL B-527 / VKM B-1787 / 2291 / W).